A 476-amino-acid polypeptide reads, in one-letter code: Sulfate adenylyltransferase subunit 1 (476 aa).

One can recognise a tr-type G domain in the interval 25-241 (KSLLRFLTCG…LETVEVQRVV (217 aa)). Positions 34–41 (GSVDDGKS) are G1. 34–41 (GSVDDGKS) serves as a coordination point for GTP. The tract at residues 92 to 96 (GITID) is G2. Residues 113–116 (DTPG) form a G3 region. GTP-binding positions include 113–117 (DTPGH) and 168–171 (NKMD). The interval 168–171 (NKMD) is G4. The interval 206-208 (SAL) is G5.

The protein belongs to the TRAFAC class translation factor GTPase superfamily. Classic translation factor GTPase family. CysN/NodQ subfamily. As to quaternary structure, heterodimer composed of CysD, the smaller subunit, and CysN.

The enzyme catalyses sulfate + ATP + H(+) = adenosine 5'-phosphosulfate + diphosphate. It participates in sulfur metabolism; hydrogen sulfide biosynthesis; sulfite from sulfate: step 1/3. In terms of biological role, with CysD forms the ATP sulfurylase (ATPS) that catalyzes the adenylation of sulfate producing adenosine 5'-phosphosulfate (APS) and diphosphate, the first enzymatic step in sulfur assimilation pathway. APS synthesis involves the formation of a high-energy phosphoric-sulfuric acid anhydride bond driven by GTP hydrolysis by CysN coupled to ATP hydrolysis by CysD. This Erwinia tasmaniensis (strain DSM 17950 / CFBP 7177 / CIP 109463 / NCPPB 4357 / Et1/99) protein is Sulfate adenylyltransferase subunit 1.